A 207-amino-acid polypeptide reads, in one-letter code: Superoxide dismutase [Mn] (207 aa).

Residues histidine 28, histidine 76, aspartate 160, and histidine 164 each coordinate Mn(2+).

This sequence belongs to the iron/manganese superoxide dismutase family. The cofactor is Mn(2+).

It carries out the reaction 2 superoxide + 2 H(+) = H2O2 + O2. Its function is as follows. Destroys superoxide anion radicals which are normally produced within the cells and which are toxic to biological systems. The chain is Superoxide dismutase [Mn] (sodA) from Mycobacterium leprae (strain TN).